The chain runs to 378 residues: Dual-specificity RNA methyltransferase RlmN (378 aa).

The Proton acceptor role is filled by Glu-96. The region spanning Asp-102–Asp-340 is the Radical SAM core domain. A disulfide bridge links Cys-109 with Cys-345. [4Fe-4S] cluster-binding residues include Cys-116, Cys-120, and Cys-123. Residues Gly-170–Glu-171, Ser-202, Ser-224–His-226, and Asn-302 each bind S-adenosyl-L-methionine. Residue Cys-345 is the S-methylcysteine intermediate of the active site.

This sequence belongs to the radical SAM superfamily. RlmN family. It depends on [4Fe-4S] cluster as a cofactor.

The protein localises to the cytoplasm. The enzyme catalyses adenosine(2503) in 23S rRNA + 2 reduced [2Fe-2S]-[ferredoxin] + 2 S-adenosyl-L-methionine = 2-methyladenosine(2503) in 23S rRNA + 5'-deoxyadenosine + L-methionine + 2 oxidized [2Fe-2S]-[ferredoxin] + S-adenosyl-L-homocysteine. It catalyses the reaction adenosine(37) in tRNA + 2 reduced [2Fe-2S]-[ferredoxin] + 2 S-adenosyl-L-methionine = 2-methyladenosine(37) in tRNA + 5'-deoxyadenosine + L-methionine + 2 oxidized [2Fe-2S]-[ferredoxin] + S-adenosyl-L-homocysteine. Functionally, specifically methylates position 2 of adenine 2503 in 23S rRNA and position 2 of adenine 37 in tRNAs. m2A2503 modification seems to play a crucial role in the proofreading step occurring at the peptidyl transferase center and thus would serve to optimize ribosomal fidelity. This is Dual-specificity RNA methyltransferase RlmN from Hahella chejuensis (strain KCTC 2396).